Consider the following 723-residue polypeptide: Protein Hook homolog (723 aa).

Residues 4–120 (TELCECLVQW…RLLQLILGCA (117 aa)) form the Calponin-homology (CH) domain. Coiled coils occupy residues 162-423 (VLPE…MQLQ) and 457-665 (EIKE…IVSA). The disordered stretch occupies residues 682–723 (LANGGPMQGGQSFLARQRQATSRRTTVSTTHPGHARSVNFVN). Residues 696-711 (ARQRQATSRRTTVSTT) are compositionally biased toward low complexity.

The protein belongs to the hook family. In terms of assembly, interacts with microtubules.

The protein localises to the cytoplasm. It localises to the cytoskeleton. Its function is as follows. May function to promote vesicle trafficking and/or fusion. May act to link a number of membrane-bound organelles to the cytoskeleton. The protein is Protein Hook homolog of Branchiostoma floridae (Florida lancelet).